A 1175-amino-acid chain; its full sequence is Pyruvate carboxylase 1 (1175 aa).

Residues 31-481 (EFNKVMVANR…DTYFIDEHPE (451 aa)) form the Biotin carboxylation domain. ATP is bound by residues lysine 147, glutamate 231, and histidine 266. The 198-residue stretch at 151–348 (RQAAIEAGVQ…LVQAQIRIAE (198 aa)) folds into the ATP-grasp domain. The active site involves arginine 323. A Pyruvate carboxyltransferase domain is found at 559-828 (CMITDTTFRD…DTGLSLDDIS (270 aa)). Substrate contacts are provided by residues 567 to 571 (RDAHQ) and arginine 640. Residue aspartate 568 participates in a divalent metal cation binding. Residues lysine 737, histidine 767, and histidine 769 each coordinate a divalent metal cation. Lysine 737 bears the N6-carboxylysine mark. Residue threonine 904 participates in substrate binding. One can recognise a Biotinyl-binding domain in the interval 1099-1174 (RALPGVRGHI…SAGDLVVEVE (76 aa)). Lysine 1140 is modified (N6-biotinyllysine).

In terms of assembly, interacts with sir-2.2 and sir-2.3. Biotin is required as a cofactor. It depends on Zn(2+) as a cofactor.

It localises to the cytoplasm. It catalyses the reaction hydrogencarbonate + pyruvate + ATP = oxaloacetate + ADP + phosphate + H(+). The protein operates within carbohydrate biosynthesis; gluconeogenesis. In terms of biological role, pyruvate carboxylase catalyzes a 2-step reaction, involving the ATP-dependent carboxylation of the covalently attached biotin in the first step and the transfer of the carboxyl group to pyruvate in the second. The protein is Pyruvate carboxylase 1 of Caenorhabditis elegans.